We begin with the raw amino-acid sequence, 487 residues long: Protein Optix (487 aa).

Positions tryptophan 154–alanine 214 form a DNA-binding region, homeobox. Disordered regions lie at residues asparagine 182–proline 330 and alanine 443–histidine 463. Over residues glycine 255–alanine 277 the composition is skewed to polar residues. Residues asparagine 278–aspartate 293 show a composition bias toward basic and acidic residues. The span at leucine 294 to threonine 312 shows a compositional bias: low complexity. Residues glycine 321–proline 330 show a composition bias toward gly residues.

The protein belongs to the SIX/Sine oculis homeobox family. In terms of tissue distribution, expressed during early development of the head. First expressed in a band around the anterior end of stage 5 blastoderm embryo, at 93% to 85% egg length. By gastrula stage, site of expression shifts to the dorsal-anterior region. At stage 12, expression is found in the clypeolabrum, the stomodaeum, and in ectoderm dorsal to the future supraesophageal ganglion.

It localises to the nucleus. Its function is as follows. May be involved in head or eye development; development of the clypeolabrum and several head sensory organs. The sequence is that of Protein Optix (Optix) from Drosophila melanogaster (Fruit fly).